We begin with the raw amino-acid sequence, 1758 residues long: RanBP2-like and GRIP domain-containing protein 3 (1758 aa).

Ser21 is modified (phosphoserine). Residues 60 to 93 (PRAHRFLGLLYELEENTEKAVECYRRSVELNPTQ) form a TPR 1 repeat. A coiled-coil region spans residues 176 to 229 (RSTKRLKDAVARCHEAERNIALRSSLEWNSCVVQTLKEYLESLQCLESDKSDWR). One copy of the TPR 2 repeat lies at 584–617 (QKMGSGLNSFYDQREYIGRSVHYWKKVLPLLKII). Positions 761 to 805 (GPLYKNGSLRNADSEIKHSTPSPTKYSLSPSKSYKYSPKTPPRWA) are disordered. Positions 779 to 798 (STPSPTKYSLSPSKSYKYSP) are enriched in low complexity. Positions 805-837 (AEDQNSLLKMIRQEVKAIKEEMQELKLNSSKSA) form a coiled coil. Positions 1037–1173 (HFEPVVQMPE…FEECQRLLLD (137 aa)) constitute a RanBD1 1 domain. Disordered stretches follow at residues 1216–1248 (VAEE…PTLE), 1307–1335 (AKLN…GQYF), and 1581–1622 (NNSE…KNLS). The span at 1236–1245 (IKPNAENTGP) shows a compositional bias: polar residues. Positions 1318-1330 (TDEESDVTQEEER) are enriched in acidic residues. The RanBD1 2 domain maps to 1334–1470 (YFEPVVPLPD…FDEAKTAQEK (137 aa)). Residues 1581 to 1594 (NNSETSSVAQSGSE) are compositionally biased toward polar residues. The span at 1595–1618 (SKVEPKKCELSKNSDIEQSSDSKV) shows a compositional bias: basic and acidic residues. One can recognise a GRIP domain in the interval 1703-1753 (QEVSAANVEHLKNVLLQFIFLKPGSERERLLPVINTMLQLSLEEKGKLAAV).

The sequence is that of RanBP2-like and GRIP domain-containing protein 3 (RGPD3) from Homo sapiens (Human).